The following is a 300-amino-acid chain: Actin-related protein 2/3 complex subunit 2-A (300 aa).

Belongs to the ARPC2 family. As to quaternary structure, component of the Arp2/3 complex composed of actr2/arp2, actr3/arp3, arpc1 (arpc1a or arpc1b), arpc2, arpc3, arpc4 and arpc5.

The protein localises to the cytoplasm. Its subcellular location is the cytoskeleton. It is found in the cell projection. The protein resides in the nucleus. Its function is as follows. Actin-binding component of the Arp2/3 complex, a multiprotein complex that mediates actin polymerization upon stimulation by nucleation-promoting factor (NPF). The Arp2/3 complex mediates the formation of branched actin networks in the cytoplasm, providing the force for cell motility. In addition to its role in the cytoplasmic cytoskeleton, the Arp2/3 complex also promotes actin polymerization in the nucleus, thereby regulating gene transcription and repair of damaged DNA. The Arp2/3 complex promotes homologous recombination (HR) repair in response to DNA damage by promoting nuclear actin polymerization, leading to drive motility of double-strand breaks (DSBs). This is Actin-related protein 2/3 complex subunit 2-A (arpc2-a) from Xenopus laevis (African clawed frog).